A 465-amino-acid chain; its full sequence is Protein dml1 (465 aa).

Position 446 is a phosphoserine (S446).

The protein belongs to the misato family.

The protein localises to the mitochondrion. Involved in the partitioning of the mitochondrial organelle and mitochondrial DNA (mtDNA) inheritance. In Schizosaccharomyces pombe (strain 972 / ATCC 24843) (Fission yeast), this protein is Protein dml1 (dml1).